The sequence spans 132 residues: ATP synthase epsilon chain (132 aa).

It belongs to the ATPase epsilon chain family. As to quaternary structure, F-type ATPases have 2 components, CF(1) - the catalytic core - and CF(0) - the membrane proton channel. CF(1) has five subunits: alpha(3), beta(3), gamma(1), delta(1), epsilon(1). CF(0) has three main subunits: a, b and c.

It is found in the cell inner membrane. Produces ATP from ADP in the presence of a proton gradient across the membrane. This is ATP synthase epsilon chain from Cereibacter sphaeroides (strain ATCC 17025 / ATH 2.4.3) (Rhodobacter sphaeroides).